A 179-amino-acid polypeptide reads, in one-letter code: Large ribosomal subunit protein uL6 (179 aa).

The protein belongs to the universal ribosomal protein uL6 family. In terms of assembly, part of the 50S ribosomal subunit.

Its function is as follows. This protein binds to the 23S rRNA, and is important in its secondary structure. It is located near the subunit interface in the base of the L7/L12 stalk, and near the tRNA binding site of the peptidyltransferase center. This is Large ribosomal subunit protein uL6 from Chlorobium chlorochromatii (strain CaD3).